Consider the following 217-residue polypeptide: Small ribosomal subunit protein uS3 (217 aa).

Residues 38-106 (VRKYIETALK…RVHINIIEIK (69 aa)) form the KH type-2 domain.

This sequence belongs to the universal ribosomal protein uS3 family. In terms of assembly, part of the 30S ribosomal subunit. Forms a tight complex with proteins S10 and S14.

Functionally, binds the lower part of the 30S subunit head. Binds mRNA in the 70S ribosome, positioning it for translation. The polypeptide is Small ribosomal subunit protein uS3 (Lysinibacillus sphaericus (strain C3-41)).